A 598-amino-acid chain; its full sequence is N-acetylmuramoyl-L-alanine amidase (598 aa).

The signal sequence occupies residues 1–31 (MSPGNWKTTMVVRGILLILYGLLLQPEPGTA). Disordered stretches follow at residues 172–194 (SSAH…SPNV) and 212–233 (STGV…KAKS). Ser-261 is subject to Phosphoserine. The N-linked (GlcNAc...) asparagine glycan is linked to Asn-353. Residues 428–554 (FLYIHHTYVP…RQLVRTDCPG (127 aa)) form the N-acetylmuramoyl-L-alanine amidase domain. Position 432 (His-432) interacts with Zn(2+). An intrachain disulfide couples Cys-441 to Cys-447. Residue Asn-507 is glycosylated (N-linked (GlcNAc...) asparagine). 2 residues coordinate Zn(2+): His-544 and Cys-552.

Belongs to the N-acetylmuramoyl-L-alanine amidase 2 family. Requires Zn(2+) as cofactor.

The protein resides in the secreted. The protein localises to the membrane. The catalysed reaction is Hydrolyzes the link between N-acetylmuramoyl residues and L-amino acid residues in certain cell-wall glycopeptides.. Functionally, may play a scavenger role by digesting biologically active peptidoglycan (PGN) into biologically inactive fragments. Has no direct bacteriolytic activity. This chain is N-acetylmuramoyl-L-alanine amidase (PGLYRP2), found in Sus scrofa (Pig).